We begin with the raw amino-acid sequence, 396 residues long: Acetate kinase (396 aa).

Residue Asn-7 coordinates Mg(2+). Lys-14 is a binding site for ATP. Arg-88 is a substrate binding site. Asp-145 (proton donor/acceptor) is an active-site residue. ATP-binding positions include 205 to 209, 279 to 281, and 327 to 331; these read HLGNG, DFR, and GIGEN. Glu-381 contributes to the Mg(2+) binding site.

The protein belongs to the acetokinase family. In terms of assembly, homodimer. Mg(2+) is required as a cofactor. It depends on Mn(2+) as a cofactor.

It localises to the cytoplasm. The enzyme catalyses acetate + ATP = acetyl phosphate + ADP. The protein operates within metabolic intermediate biosynthesis; acetyl-CoA biosynthesis; acetyl-CoA from acetate: step 1/2. Functionally, catalyzes the formation of acetyl phosphate from acetate and ATP. Can also catalyze the reverse reaction. The sequence is that of Acetate kinase from Campylobacter jejuni (strain RM1221).